Here is a 245-residue protein sequence, read N- to C-terminus: Photosystem II protein PSBS1 (245 aa).

A chloroplast-targeting transit peptide spans 1–25 (MAMTLSTKAFAQRGVSARKNTVRVY). The next 4 membrane-spanning stretches (helical) occupy residues 72-92 (LFVG…EILT), 108-128 (GIEV…AAVL), 185-205 (LGFA…LAQF), and 217-237 (EFGL…EGSG).

Belongs to the ELIP/psbS family.

It localises to the plastid. The protein resides in the chloroplast thylakoid membrane. Functionally, required for non-photochemical quenching (NPQ), a mechanism that converts and dissipates the harmful excess absorbed light energy into heat and protect the photosynthetic apparatus from photo-oxidative damage. Seems involved in the activation of NPQ, possibly by promoting conformational changes required for activation of LHCSR3-dependent quenching in the antenna of photosystem II (PSII). This is Photosystem II protein PSBS1 from Chlamydomonas reinhardtii (Chlamydomonas smithii).